Consider the following 576-residue polypeptide: Peptidoglycan D,D-transpeptidase FtsI (576 aa).

Residues 22–42 (ITILLSLIIITIILVLSRITF) form a helical membrane-spanning segment. Ser308 acts as the Acyl-ester intermediate in catalysis.

Belongs to the transpeptidase family. FtsI subfamily.

The protein localises to the cell inner membrane. It carries out the reaction Preferential cleavage: (Ac)2-L-Lys-D-Ala-|-D-Ala. Also transpeptidation of peptidyl-alanyl moieties that are N-acyl substituents of D-alanine.. It functions in the pathway cell wall biogenesis; peptidoglycan biosynthesis. Its function is as follows. Catalyzes cross-linking of the peptidoglycan cell wall at the division septum. In Buchnera aphidicola subsp. Baizongia pistaciae (strain Bp), this protein is Peptidoglycan D,D-transpeptidase FtsI.